The following is a 374-amino-acid chain: Alcohol dehydrogenase class-3 (374 aa).

Ala-2 carries the N-acetylalanine modification. Zn(2+) is bound by residues Cys-45, His-67, Cys-97, Cys-100, Cys-103, Cys-111, and Cys-174. Lys-233 carries the N6-succinyllysine modification. Ser-247 is subject to Phosphoserine. The residue at position 315 (Lys-315) is an N6-succinyllysine. Residues Ser-324 and Ser-351 each carry the phosphoserine modification.

The protein belongs to the zinc-containing alcohol dehydrogenase family. Class-III subfamily. In terms of assembly, homodimer. It depends on Zn(2+) as a cofactor.

The protein localises to the cytoplasm. The enzyme catalyses a primary alcohol + NAD(+) = an aldehyde + NADH + H(+). The catalysed reaction is a secondary alcohol + NAD(+) = a ketone + NADH + H(+). It catalyses the reaction S-(hydroxymethyl)glutathione + NADP(+) = S-formylglutathione + NADPH + H(+). It carries out the reaction S-(hydroxymethyl)glutathione + NAD(+) = S-formylglutathione + NADH + H(+). The enzyme catalyses 20-oxo-(5Z,8Z,11Z,14Z)-eicosatetraenoate + NAD(+) + H2O = (5Z,8Z,11Z,14Z)-eicosatetraenedioate + NADH + 2 H(+). The catalysed reaction is 20-hydroxy-(5Z,8Z,11Z,14Z)-eicosatetraenoate + NAD(+) = 20-oxo-(5Z,8Z,11Z,14Z)-eicosatetraenoate + NADH + H(+). It catalyses the reaction S-nitrosoglutathione + NADH + H(+) = S-(hydroxysulfenamide)glutathione + NAD(+). Catalyzes the oxidation of long-chain primary alcohols and the oxidation of S-(hydroxymethyl) glutathione. Also oxidizes long chain omega-hydroxy fatty acids, such as 20-HETE, producing both the intermediate aldehyde, 20-oxoarachidonate and the end product, a dicarboxylic acid, (5Z,8Z,11Z,14Z)-eicosatetraenedioate. Class-III ADH is remarkably ineffective in oxidizing ethanol. Required for clearance of cellular formaldehyde, a cytotoxic and carcinogenic metabolite that induces DNA damage. Also acts as a S-nitroso-glutathione reductase by catalyzing the NADH-dependent reduction of S-nitrosoglutathione, thereby regulating protein S-nitrosylation. The protein is Alcohol dehydrogenase class-3 of Homo sapiens (Human).